The following is a 457-amino-acid chain: Multidrug resistance protein MdtK (457 aa).

The next 12 membrane-spanning stretches (helical) occupy residues Leu11–Val31, Ala46–Leu66, Trp93–Ile113, Ala127–Leu147, Gly160–Tyr180, Leu188–Met208, Leu243–Val263, Leu278–Gly300, Tyr316–Phe336, Val350–Ile370, Ile387–Gly407, and Pro418–Leu438.

This sequence belongs to the multi antimicrobial extrusion (MATE) (TC 2.A.66.1) family. MdtK subfamily.

The protein localises to the cell inner membrane. Multidrug efflux pump that functions probably as a Na(+)/drug antiporter. In Yersinia enterocolitica serotype O:8 / biotype 1B (strain NCTC 13174 / 8081), this protein is Multidrug resistance protein MdtK.